The sequence spans 118 residues: Large ribosomal subunit protein uL18 (118 aa).

The protein belongs to the universal ribosomal protein uL18 family. Part of the 50S ribosomal subunit; part of the 5S rRNA/L5/L18/L25 subcomplex. Contacts the 5S and 23S rRNAs.

In terms of biological role, this is one of the proteins that bind and probably mediate the attachment of the 5S RNA into the large ribosomal subunit, where it forms part of the central protuberance. This Rickettsia conorii (strain ATCC VR-613 / Malish 7) protein is Large ribosomal subunit protein uL18.